The following is a 1454-amino-acid chain: Receptor-type tyrosine-protein phosphatase T (1454 aa).

The signal sequence occupies residues 1–29; it reads MGSLGGLALCLLRLLLLGLQRPPLPGAGA. At 30-770 the chain is on the extracellular side; it reads QSAAGGCSFD…EKQVDNTVKM (741 aa). An MAM domain is found at 34–195; it reads GGCSFDEHYS…VRVLAHPCRK (162 aa). N-linked (GlcNAc...) asparagine glycosylation is found at N82, N102, N141, and N212. The Ig-like C2-type domain maps to 197 to 288; the sequence is PHFLRLQNVE…SGVSNYAELI (92 aa). A disulfide bridge connects residues C217 and C271. Fibronectin type-III domains follow at residues 295-388, 393-487, and 488-594; these read PIAP…TKCA, GPQN…TEED, and VPGA…SAPS. N-linked (GlcNAc...) asparagine glycans are attached at residues N425, N514, N551, N605, N658, and N688. A Fibronectin type-III 4 domain is found at 670 to 767; it reads AELKPSNLPV…VEPEKQVDNT (98 aa). A helical transmembrane segment spans residues 771 to 791; the sequence is AGVIAGLLMFIIILLGVMLTI. The Cytoplasmic portion of the chain corresponds to 792-1454; that stretch reads KRRKLAKKQK…EVALEYLSSF (663 aa). The disordered stretch occupies residues 800–852; that stretch reads QKETQSGAQREMGPVASTDKPTAKLGTNRNDEGFSSSSQDVNGFTDGSRGELS. Positions 824-841 are enriched in polar residues; that stretch reads LGTNRNDEGFSSSSQDVN. Tyrosine-protein phosphatase domains are found at residues 902–1156 and 1188–1450; these read FKEE…ILEA and IKDE…ALEY. Residues D1065, 1097 to 1103, and Q1141 each bind substrate; that span reads CSAGAGR. C1097 acts as the Phosphocysteine intermediate in catalysis. S1221 bears the Phosphoserine mark. C1391 (phosphocysteine intermediate) is an active-site residue.

It belongs to the protein-tyrosine phosphatase family. Receptor class 2B subfamily. Expression is restricted to the CNS. Distributed throughout the brain and spinal cord.

Its subcellular location is the membrane. The catalysed reaction is O-phospho-L-tyrosyl-[protein] + H2O = L-tyrosyl-[protein] + phosphate. May be involved in both signal transduction and cellular adhesion in the CNS. May have specific signaling roles in the tyrosine phosphorylation/dephosphorylation pathway in the anterior compartment of the adult cerebellar cortex. This chain is Receptor-type tyrosine-protein phosphatase T (Ptprt), found in Mus musculus (Mouse).